A 560-amino-acid polypeptide reads, in one-letter code: MNNNIMNLIAAIVLSLSIIFGWQYFVVKPEHKKQQQQIAMQKAENLKKQKLKALIKPASDLVVQEANQVQRIKIESESLTGSISLKGLRFDDLILKKYKQDLSKNSTEVRLFSPANTENAYFAEIGLVSNLSSVKLPNNDTIWNSDGEILSPEKPVNLFWVNEDGVKFLVTITLDENYLFTVEQTIVNNSDKELPVQSYGLINRKYIAVEKAVNILHQGPIGCINENLKEYSYDDIKDKKSEKFVASKVDWIGMTDKYWLSSLIPDKSSNYSSNFNYALTQGVERYQVDFISPVQIIKSGENFSITSRIFAGAKKVDLLDKYEKQYGIKLFDRAIDFGWFYIITKPVFYAMNFFYGYVGNFGISILIVTVIIKLLMFTLANKSYCSMKKMKNLQPEIDRIKNLYGDDKARLNQEIMALYKKEKVNPVAGCLPILVQIPVFFSIYKVLYVTIEMRQAPFYGWIKDLSAPDPTTIFNLFGFLPFSPPSFLMIGAWPILMAITMFLQQRMSPEPADPVQAQVMKFMPLIFLVMFSSFPVGLLIYWSWNNILSIIQQYYINKFN.

The next 6 helical transmembrane spans lie at 7 to 27 (NLIA…YFVV), 334 to 354 (AIDF…MNFF), 357 to 377 (YVGN…LLMF), 431 to 451 (LPIL…YVTI), 476 to 496 (LFGF…WPIL), and 522 to 542 (FMPL…LIYW).

Belongs to the OXA1/ALB3/YidC family. Type 1 subfamily. In terms of assembly, interacts with the Sec translocase complex via SecD. Specifically interacts with transmembrane segments of nascent integral membrane proteins during membrane integration.

The protein localises to the cell inner membrane. Functionally, required for the insertion and/or proper folding and/or complex formation of integral membrane proteins into the membrane. Involved in integration of membrane proteins that insert both dependently and independently of the Sec translocase complex, as well as at least some lipoproteins. Aids folding of multispanning membrane proteins. In Rickettsia canadensis (strain McKiel), this protein is Membrane protein insertase YidC.